The following is a 688-amino-acid chain: MTRKQRAIFEPALVRTALLDAVKKLDPRVQWRNPVMFVVYLGSGLTTLIWLAILSGQTTGSALFTGSVALWLWFTVLFANFAEALAEGRSKAQAESLRGVKKTSWAKKLSEARFDAPQEKVSADSLRKGDVVLIEAGDTVPCDGEVLEGGASVDESAITGESAPVIRESGGDFSSVTGGTRVLSDWLVVECSVNPGETFLDRMIAMVEGAKRRKTPNEVALTILLVALTIVFLLATATLYPFSVFSVEANQAGSPVTITVLVALLVCLIPTTIGGLLSAIGVAGMSRMLGANVIATSGRAVEAAGDVDVLLLDKTGTITLGNRQASEFLPAPGVTEQQLADAAQLSSLADETPEGRSIVVLAKQRFNLRERDLHSLNATFVPFSAQTRMSGVNVQDRMIRKGAVDAIRRHVESNQGHFPRAVEDAVESVARTGGTPLVVADGPRVLGVVALKDIVKGGIKERFAELRKMGIKTVMITGDNRLTAAAIAAEAGVDDFLAEATPEAKLALIRQYQAEGRLVAMTGDGTNDAPALAQADVAVAMNSGTQAAKEAGNMVDLDSNPTKLIEVVHIGKQMLMTRGSLTTFSIANDVAKYFAIIPAAFAATYPQLNALNVMQLHSPASAILSAVIFNALIIVFLIPLALKGVSYKAMSAAALLRRNLWIYGLGGLLVPFVGIKLIDLVLAALIMS.

The next 4 helical transmembrane spans lie at 34 to 54, 62 to 82, 219 to 239, and 260 to 280; these read PVMFVVYLGSGLTTLIWLAIL, ALFTGSVALWLWFTVLFANFA, VALTILLVALTIVFLLATATL, and VLVALLVCLIPTTIGGLLSAI. The active-site 4-aspartylphosphate intermediate is the Asp313. ATP is bound by residues Asp350, Glu354, 383–390, and Lys401; that span reads FSAQTRMS. Positions 524 and 528 each coordinate Mg(2+). The next 3 helical transmembrane spans lie at 594–614, 622–642, and 667–687; these read FAIIPAAFAATYPQLNALNVM, AILSAVIFNALIIVFLIPLAL, and GLLVPFVGIKLIDLVLAALIM.

The protein belongs to the cation transport ATPase (P-type) (TC 3.A.3) family. Type IA subfamily. The system is composed of three essential subunits: KdpA, KdpB and KdpC.

It localises to the cell inner membrane. The catalysed reaction is K(+)(out) + ATP + H2O = K(+)(in) + ADP + phosphate + H(+). Part of the high-affinity ATP-driven potassium transport (or Kdp) system, which catalyzes the hydrolysis of ATP coupled with the electrogenic transport of potassium into the cytoplasm. This subunit is responsible for energy coupling to the transport system and for the release of the potassium ions to the cytoplasm. The protein is Potassium-transporting ATPase ATP-binding subunit of Yersinia enterocolitica serotype O:8 / biotype 1B (strain NCTC 13174 / 8081).